Here is a 366-residue protein sequence, read N- to C-terminus: Histidinol-phosphate aminotransferase (366 aa).

Position 222 is an N6-(pyridoxal phosphate)lysine (lysine 222).

Belongs to the class-II pyridoxal-phosphate-dependent aminotransferase family. Histidinol-phosphate aminotransferase subfamily. In terms of assembly, homodimer. Requires pyridoxal 5'-phosphate as cofactor.

It catalyses the reaction L-histidinol phosphate + 2-oxoglutarate = 3-(imidazol-4-yl)-2-oxopropyl phosphate + L-glutamate. It functions in the pathway amino-acid biosynthesis; L-histidine biosynthesis; L-histidine from 5-phospho-alpha-D-ribose 1-diphosphate: step 7/9. In Lysinibacillus sphaericus (strain C3-41), this protein is Histidinol-phosphate aminotransferase.